A 129-amino-acid chain; its full sequence is Small ribosomal subunit protein uS11 (129 aa).

The protein belongs to the universal ribosomal protein uS11 family. As to quaternary structure, part of the 30S ribosomal subunit. Interacts with proteins S7 and S18. Binds to IF-3.

In terms of biological role, located on the platform of the 30S subunit, it bridges several disparate RNA helices of the 16S rRNA. Forms part of the Shine-Dalgarno cleft in the 70S ribosome. In Azobacteroides pseudotrichonymphae genomovar. CFP2, this protein is Small ribosomal subunit protein uS11.